Consider the following 155-residue polypeptide: Small ribosomal subunit protein uS9 (155 aa).

Belongs to the universal ribosomal protein uS9 family.

The chain is Small ribosomal subunit protein uS9 from Sinorhizobium fredii (strain NBRC 101917 / NGR234).